We begin with the raw amino-acid sequence, 240 residues long: 45 kDa antigen (240 aa).

2 Fibronectin type-III domains span residues 1-109 (EFPD…FHTL) and 110-210 (ANGT…KSGH).

This is 45 kDa antigen from Taenia ovis (Sheep tapeworm).